Reading from the N-terminus, the 167-residue chain is NADPH-dependent 7-cyano-7-deazaguanine reductase (167 aa).

The disordered stretch occupies residues 1–24; sequence MTTRSQDQTRDLKVLGTGRLTSPE. The Thioimide intermediate role is filled by C57. D64 (proton donor) is an active-site residue. Substrate contacts are provided by residues 79–81 and 98–99; these read VES and ME.

It belongs to the GTP cyclohydrolase I family. QueF type 1 subfamily.

The protein resides in the cytoplasm. The catalysed reaction is 7-aminomethyl-7-carbaguanine + 2 NADP(+) = 7-cyano-7-deazaguanine + 2 NADPH + 3 H(+). Its pathway is tRNA modification; tRNA-queuosine biosynthesis. In terms of biological role, catalyzes the NADPH-dependent reduction of 7-cyano-7-deazaguanine (preQ0) to 7-aminomethyl-7-deazaguanine (preQ1). In Desulfovibrio desulfuricans (strain ATCC 27774 / DSM 6949 / MB), this protein is NADPH-dependent 7-cyano-7-deazaguanine reductase.